Reading from the N-terminus, the 906-residue chain is Protein translocase subunit SecA (906 aa).

ATP is bound by residues Q87, 105–109 (GEGKT), and D521. Residues 849–865 (STATAAEPAPEASQSQS) are compositionally biased toward low complexity. Residues 849 to 897 (STATAAEPAPEASQSQSTNDATASQNPPITEVEASKVGRNQPCPCGSGK) form a disordered region. Over residues 866 to 876 (TNDATASQNPP) the composition is skewed to polar residues. Zn(2+) is bound by residues C891, C893, C902, and C903.

It belongs to the SecA family. Monomer and homodimer. Part of the essential Sec protein translocation apparatus which comprises SecA, SecYEG and auxiliary proteins SecDF-YajC and YidC. Zn(2+) serves as cofactor.

The protein resides in the cell inner membrane. It localises to the cytoplasm. The enzyme catalyses ATP + H2O + cellular proteinSide 1 = ADP + phosphate + cellular proteinSide 2.. In terms of biological role, part of the Sec protein translocase complex. Interacts with the SecYEG preprotein conducting channel. Has a central role in coupling the hydrolysis of ATP to the transfer of proteins into and across the cell membrane, serving both as a receptor for the preprotein-SecB complex and as an ATP-driven molecular motor driving the stepwise translocation of polypeptide chains across the membrane. The polypeptide is Protein translocase subunit SecA (Dichelobacter nodosus (strain VCS1703A)).